The sequence spans 211 residues: uncharacterized protein (211 aa).

This is an uncharacterized protein from Mycoplasma pneumoniae (strain ATCC 29342 / M129 / Subtype 1) (Mycoplasmoides pneumoniae).